Reading from the N-terminus, the 154-residue chain is Myoglobin (154 aa).

The 147-residue stretch at 2–148 (GLSDGEWQLV…FRKDIAAKYK (147 aa)) folds into the Globin domain. A Phosphoserine modification is found at Ser4. His65 is a nitrite binding site. His65 contacts O2. Thr68 carries the post-translational modification Phosphothreonine. His94 lines the heme b pocket.

It belongs to the globin family. In terms of assembly, monomeric.

The protein localises to the cytoplasm. Its subcellular location is the sarcoplasm. It carries out the reaction Fe(III)-heme b-[protein] + nitric oxide + H2O = Fe(II)-heme b-[protein] + nitrite + 2 H(+). The catalysed reaction is H2O2 + AH2 = A + 2 H2O. In terms of biological role, monomeric heme protein which primary function is to store oxygen and facilitate its diffusion within muscle tissues. Reversibly binds oxygen through a pentacoordinated heme iron and enables its timely and efficient release as needed during periods of heightened demand. Depending on the oxidative conditions of tissues and cells, and in addition to its ability to bind oxygen, it also has a nitrite reductase activity whereby it regulates the production of bioactive nitric oxide. Under stress conditions, like hypoxia and anoxia, it also protects cells against reactive oxygen species thanks to its pseudoperoxidase activity. In Peponocephala electra (Melon-headed whale), this protein is Myoglobin (MB).